The following is a 199-amino-acid chain: Protein Maeo_0138 (199 aa).

Positions 7-197 (EEGKFAVKFA…ELSPNGKIVE (191 aa)) constitute an AMMECR1 domain.

The protein is Protein Maeo_0138 of Methanococcus aeolicus (strain ATCC BAA-1280 / DSM 17508 / OCM 812 / Nankai-3).